The chain runs to 354 residues: tRNA N6-adenosine threonylcarbamoyltransferase (354 aa).

The Fe cation site is built by histidine 111 and histidine 115. Substrate-binding positions include 134–138 (LVSGG), aspartate 167, glycine 180, and asparagine 279. Aspartate 319 contributes to the Fe cation binding site.

This sequence belongs to the KAE1 / TsaD family. Fe(2+) serves as cofactor.

The protein localises to the cytoplasm. It carries out the reaction L-threonylcarbamoyladenylate + adenosine(37) in tRNA = N(6)-L-threonylcarbamoyladenosine(37) in tRNA + AMP + H(+). Functionally, required for the formation of a threonylcarbamoyl group on adenosine at position 37 (t(6)A37) in tRNAs that read codons beginning with adenine. Is involved in the transfer of the threonylcarbamoyl moiety of threonylcarbamoyl-AMP (TC-AMP) to the N6 group of A37, together with TsaE and TsaB. TsaD likely plays a direct catalytic role in this reaction. In Neisseria meningitidis, this protein is tRNA N6-adenosine threonylcarbamoyltransferase.